Reading from the N-terminus, the 460-residue chain is tRNA modification GTPase MnmE (460 aa).

The (6S)-5-formyl-5,6,7,8-tetrahydrofolate site is built by Arg-23, Glu-86, and Arg-126. The TrmE-type G domain maps to 222-381 (GLSTAIIGRP…LEAAIASLFF (160 aa)). Residue Asn-232 participates in K(+) binding. GTP contacts are provided by residues 232 to 237 (NVGKSS), 251 to 257 (TDIAGTT), and 276 to 279 (DTAG). Ser-236 contacts Mg(2+). K(+) is bound by residues Thr-251, Ile-253, and Thr-256. A Mg(2+)-binding site is contributed by Thr-257. Position 460 (Lys-460) interacts with (6S)-5-formyl-5,6,7,8-tetrahydrofolate.

It belongs to the TRAFAC class TrmE-Era-EngA-EngB-Septin-like GTPase superfamily. TrmE GTPase family. In terms of assembly, homodimer. Heterotetramer of two MnmE and two MnmG subunits. The cofactor is K(+).

It is found in the cytoplasm. Its function is as follows. Exhibits a very high intrinsic GTPase hydrolysis rate. Involved in the addition of a carboxymethylaminomethyl (cmnm) group at the wobble position (U34) of certain tRNAs, forming tRNA-cmnm(5)s(2)U34. The sequence is that of tRNA modification GTPase MnmE from Exiguobacterium sibiricum (strain DSM 17290 / CCUG 55495 / CIP 109462 / JCM 13490 / 255-15).